Here is a 247-residue protein sequence, read N- to C-terminus: Carboxy-S-adenosyl-L-methionine synthase (247 aa).

Residues tyrosine 39, 64 to 66 (GCS), 89 to 90 (DN), 117 to 118 (DI), asparagine 132, and arginine 199 each bind S-adenosyl-L-methionine.

This sequence belongs to the class I-like SAM-binding methyltransferase superfamily. Cx-SAM synthase family. In terms of assembly, homodimer.

The enzyme catalyses prephenate + S-adenosyl-L-methionine = carboxy-S-adenosyl-L-methionine + 3-phenylpyruvate + H2O. In terms of biological role, catalyzes the conversion of S-adenosyl-L-methionine (SAM) to carboxy-S-adenosyl-L-methionine (Cx-SAM). The chain is Carboxy-S-adenosyl-L-methionine synthase from Citrobacter koseri (strain ATCC BAA-895 / CDC 4225-83 / SGSC4696).